A 281-amino-acid chain; its full sequence is MEMO1 family protein APE_1771 (281 aa).

The protein belongs to the MEMO1 family.

In Aeropyrum pernix (strain ATCC 700893 / DSM 11879 / JCM 9820 / NBRC 100138 / K1), this protein is MEMO1 family protein APE_1771.